A 174-amino-acid chain; its full sequence is Repair DNA polymerase X (174 aa).

The involved in ssDNA binding stretch occupies residues 42 to 51 (REEKMLNDVD). Residues D49 and D51 each coordinate Mg(2+). An intrachain disulfide couples C81 to C86. D100 serves as a coordination point for Mg(2+).

This sequence belongs to the DNA polymerase type-X family. It depends on Mg(2+) as a cofactor.

The protein localises to the virion. The enzyme catalyses DNA(n) + a 2'-deoxyribonucleoside 5'-triphosphate = DNA(n+1) + diphosphate. Error-prone polymerase lacking a proofreading 3'-5' exonuclease which catalyzes the gap-filling reaction during the DNA repair process. Specifically binds intermediates in the single-nucleotide base-excision repair process. Also catalyzes DNA polymerization with low nucleotide-insertion fidelity. Probably acts as a strategic DNA mutase, which gives rise to a rapid emergence of variants. Generates mismatched G-G pairs, in that case, the polymerase first binds the deoxynucleotide followed by mismatch formation. Together with the viral DNA ligase, fills the single nucleotide gaps generated by the AP endonuclease. Binds DNA with high affinity via the helix alphaE. The polypeptide is Repair DNA polymerase X (Ornithodoros (relapsing fever ticks)).